Reading from the N-terminus, the 186-residue chain is Cell division protein SepF (186 aa).

The segment at 24-91 (EDEEEEERYA…HNPPHLRAVP (68 aa)) is disordered.

The protein belongs to the SepF family. Homodimer. Interacts with FtsZ.

The protein resides in the cytoplasm. In terms of biological role, cell division protein that is part of the divisome complex and is recruited early to the Z-ring. Probably stimulates Z-ring formation, perhaps through the cross-linking of FtsZ protofilaments. Its function overlaps with FtsA. This Rubrobacter xylanophilus (strain DSM 9941 / JCM 11954 / NBRC 16129 / PRD-1) protein is Cell division protein SepF.